We begin with the raw amino-acid sequence, 610 residues long: UvrABC system protein C (610 aa).

The GIY-YIG domain maps to 16-94 (SQPGVYSMYD…IKLYQPRYNV (79 aa)). The 36-residue stretch at 204-239 (QQVLNQLVERMELASRALNFEDAAHARDQIQAVRRV) folds into the UVR domain.

Belongs to the UvrC family. Interacts with UvrB in an incision complex.

Its subcellular location is the cytoplasm. In terms of biological role, the UvrABC repair system catalyzes the recognition and processing of DNA lesions. UvrC both incises the 5' and 3' sides of the lesion. The N-terminal half is responsible for the 3' incision and the C-terminal half is responsible for the 5' incision. The protein is UvrABC system protein C of Sodalis glossinidius (strain morsitans).